The chain runs to 404 residues: Acetate kinase (404 aa).

Asn-7 is a binding site for Mg(2+). Residue Lys-14 participates in ATP binding. Residue Arg-95 participates in substrate binding. Asp-152 functions as the Proton donor/acceptor in the catalytic mechanism. Residues 212–216, 286–288, and 334–338 each bind ATP; these read HLGNG, DMR, and GIGEN. Glu-388 is a binding site for Mg(2+).

This sequence belongs to the acetokinase family. As to quaternary structure, homodimer. The cofactor is Mg(2+). Mn(2+) serves as cofactor.

It is found in the cytoplasm. The catalysed reaction is acetate + ATP = acetyl phosphate + ADP. It participates in metabolic intermediate biosynthesis; acetyl-CoA biosynthesis; acetyl-CoA from acetate: step 1/2. Functionally, catalyzes the formation of acetyl phosphate from acetate and ATP. Can also catalyze the reverse reaction. In Nitratidesulfovibrio vulgaris (strain DSM 19637 / Miyazaki F) (Desulfovibrio vulgaris), this protein is Acetate kinase.